The primary structure comprises 239 residues: Fatty acid metabolism regulator protein (239 aa).

Positions 6 to 74 (QSPAGFAEEY…HGKPTKVNNF (69 aa)) constitute an HTH gntR-type domain. The segment at residues 34-53 (ERELSELIGVTRTTLREVLQ) is a DNA-binding region (H-T-H motif).

As to quaternary structure, homodimer.

It localises to the cytoplasm. Functionally, multifunctional regulator of fatty acid metabolism. The protein is Fatty acid metabolism regulator protein of Shigella flexneri.